The primary structure comprises 262 residues: Small ribosomal subunit protein mS23 (262 aa).

Residues 242-254 (AAEEQETSLDDDA) show a composition bias toward acidic residues. The disordered stretch occupies residues 242–262 (AAEEQETSLDDDATEKVAVAA).

It belongs to the mitochondrion-specific ribosomal protein mS23 family. As to quaternary structure, component of the mitochondrial small ribosomal subunit.

The protein resides in the mitochondrion. This is Small ribosomal subunit protein mS23 (rsm25) from Aspergillus niger (strain ATCC MYA-4892 / CBS 513.88 / FGSC A1513).